A 243-amino-acid polypeptide reads, in one-letter code: MHRTKLEQKQPHFDAQKRRKKECKNSNTPFVRPKLELPHGHNKLLLHSCCAPCSGEVMEAIHASGIDFTIYFYNPNIHPLKEYLIRKEENIRFAEKWGIPFIDADYDRQNWFDRAKGMEDEPERGIRCTMCFDMRFEKAAQYAHENGFPVFTSCLGISRWKDMNQINGCGHRAAEKYDDVVYWDYNWRKGGGSQRMIEISKRERFYQQEYCGCVYSLRDTNKWREANGRQKIEIGKLYYSADK.

The span at 1-16 (MHRTKLEQKQPHFDAQ) shows a compositional bias: basic and acidic residues. The segment at 1–30 (MHRTKLEQKQPHFDAQKRRKKECKNSNTPF) is disordered. Positions 49, 50, 128, and 131 each coordinate [4Fe-4S] cluster. Cysteines 211 and 213 form a disulfide.

Belongs to the QueH family.

The enzyme catalyses epoxyqueuosine(34) in tRNA + AH2 = queuosine(34) in tRNA + A + H2O. Its pathway is tRNA modification; tRNA-queuosine biosynthesis. Its function is as follows. Catalyzes the conversion of epoxyqueuosine (oQ) to queuosine (Q), which is a hypermodified base found in the wobble positions of tRNA(Asp), tRNA(Asn), tRNA(His) and tRNA(Tyr). The sequence is that of Epoxyqueuosine reductase QueH from Histophilus somni (strain 129Pt) (Haemophilus somnus).